Consider the following 1322-residue polypeptide: MVISKRAGGRRAAGGAAAQAAPPVNRGIAKADWREGFKKPQAGVSDMTLLTQITNEAVNDNLHKRFSNAEIYTYIGNVLISVNPFRDLGIYTDEILRSYRGKNRLEMPPHVYAIAEGAYYNMLAYKENQCVIISGESGAGKTEAAKRIMQYIAAVSGDTTGTGSTSSGIHTIKDMVLATNPLLESFGCAKTLRNNNSSRHGKYLEIMFDANGSPVGATITNYLLEKARVVGQIRNERNFHIFYQLTKAASPQQRELFGLQGPEAYAYTADSQCLDVPGIDDHADFAAAFEAMRIIGLTDDEQMSMVRMLATILWLGNVHFVENAQGDAELANPDVTAFCAYLLEVDPSAVQRALTQRIMETQRGGRRGSVYEVPLNPTQAAAVRDALSKAIYNNLFDWIVARINRSLQAQSQTAASVIGVLDIYGFEIFENNSFEQLCINYVNEKLQQIFIELTLKKEQEEYAQEQIQWTPIQYFNNKIVCDLIEAKRPPGIFSALNDAVATAHADSSAADNSFMQRTSMLSSNPHFEARGSKFLVRHYAGDVMYNVQGMTEKNKDALLKDILNLVDSSSNAFLIGLFPERPDPNSKKRPPSAGDRIKASANALVDNLMQAQPSYIRTIKPNQNKSPTEYDTQAVLHQIKYLGLRENIRVRRAGFAYRNTFEKIVQRFYLLSRATSYAGDYIWQGDARSGCERIFLDTGIARDEWQLGVTKGFIKNPETLFALETMRDRYWHNMAMRIQRAWRAFMRRREESARRIQRAWRRSREGHEFLELREYGHQLLAGRKERRRFSLISMRRFMGDYLDLNGSSAEGRMLRASANLPPNEPIVFSARAQLLVSRLGRTSIPSPRFLLMSPRAVYILVTHLVNKRPQTTCERVIPLSTIRQVGLSTLRDDWIVLQVGTDEGDPLLHCDFKTEFVAYLLQQTGGRTHVVIAPQLEYVRKGRKKAHVSFRKDESIPVGDVYKSSIVSVGSGEPPTSVSRPPAKKLPRSAQPSTKRRTTSRPVTSRRPVPTVLPTTTASRGLPPAPGGTASASALAVPTTSTVAPASSASGNASGARHVPAPPPVSGGSGLPPYLQAPATSAPSSGMPSYLQRAVPAAPTAPAAPAASAAPTAAQSTSGIPSYLGSSTTKLAPPVTVQQLGSSSTAQTRSVPAPPSASATPAVATPALAPVKAAPLPPPPPTGRRLPRYRALYDFETQEAGELPLRTGDIVELEEKEENGWWLVKKGSTEGWSPADYLELIAEPAAAKPRPPPPAKPASAKPAAAPARVSQSSVTSSWTPPDSHAAPVAVMPGMGDPGGFAAILARKKAERAAAAEQAHVPE.

One can recognise a Myosin motor domain in the interval 42-728; sequence AGVSDMTLLT…TLFALETMRD (687 aa). 135 to 142 is a binding site for ATP; sequence GESGAGKT. Ser-369 carries the post-translational modification Phosphoserine. The tract at residues 417–499 is actin-binding; it reads VIGVLDIYGF…PGIFSALNDA (83 aa). IQ domains are found at residues 732-752 and 753-778; these read HNMA…REES and ARRI…YGHQ. Residues 786–980 enclose the TH1 domain; the sequence is RRRFSLISMR…SGEPPTSVSR (195 aa). Disordered stretches follow at residues 966-1090 and 1137-1162; these read IVSV…MPSY and VQQL…ATPA. Low complexity-rich tracts occupy residues 1000–1017 and 1027–1056; these read SRPV…PTTT and GGTA…ASGA. Composition is skewed to polar residues over residues 1078–1087 and 1137–1148; these read PATSAPSSGM and VQQLGSSSTAQT. One can recognise an SH3 domain in the interval 1184–1243; that stretch reads RRLPRYRALYDFETQEAGELPLRTGDIVELEEKEENGWWLVKKGSTEGWSPADYLELIAE. A disordered region spans residues 1246–1300; it reads AAKPRPPPPAKPASAKPAAAPARVSQSSVTSSWTPPDSHAAPVAVMPGMGDPGGF. Residues 1257–1267 are compositionally biased toward low complexity; the sequence is PASAKPAAAPA. Polar residues predominate over residues 1269 to 1280; it reads VSQSSVTSSWTP.

Belongs to the TRAFAC class myosin-kinesin ATPase superfamily. Myosin family. Post-translationally, phosphorylation of the TEDS site (Ser-369) is required for the polarization of the actin cytoskeleton. Phosphorylation probably activates the myosin-I ATPase activity.

It is found in the cytoplasm. The protein localises to the cytoskeleton. It localises to the actin patch. In terms of biological role, type-I myosin implicated in the organization of the actin cytoskeleton. Required for proper actin cytoskeleton polarization. At the cell cortex, assembles in patch-like structures together with proteins from the actin-polymerizing machinery and promotes actin assembly. Functions as actin nucleation-promoting factor (NPF) for the Arp2/3 complex. The polypeptide is Myosin-1 (MYO1) (Malassezia globosa (strain ATCC MYA-4612 / CBS 7966) (Dandruff-associated fungus)).